The following is a 500-amino-acid chain: Aspartyl/glutamyl-tRNA(Asn/Gln) amidotransferase subunit B (500 aa).

The protein belongs to the GatB/GatE family. GatB subfamily. In terms of assembly, heterotrimer of A, B and C subunits.

It catalyses the reaction L-glutamyl-tRNA(Gln) + L-glutamine + ATP + H2O = L-glutaminyl-tRNA(Gln) + L-glutamate + ADP + phosphate + H(+). It carries out the reaction L-aspartyl-tRNA(Asn) + L-glutamine + ATP + H2O = L-asparaginyl-tRNA(Asn) + L-glutamate + ADP + phosphate + 2 H(+). In terms of biological role, allows the formation of correctly charged Asn-tRNA(Asn) or Gln-tRNA(Gln) through the transamidation of misacylated Asp-tRNA(Asn) or Glu-tRNA(Gln) in organisms which lack either or both of asparaginyl-tRNA or glutaminyl-tRNA synthetases. The reaction takes place in the presence of glutamine and ATP through an activated phospho-Asp-tRNA(Asn) or phospho-Glu-tRNA(Gln). This is Aspartyl/glutamyl-tRNA(Asn/Gln) amidotransferase subunit B from Rhizobium johnstonii (strain DSM 114642 / LMG 32736 / 3841) (Rhizobium leguminosarum bv. viciae).